Here is a 225-residue protein sequence, read N- to C-terminus: Membrane protein LapB (225 aa).

The protein to H.influenzae HI_1119.

It localises to the cell membrane. In Mannheimia haemolytica (Pasteurella haemolytica), this protein is Membrane protein LapB (lapB).